The primary structure comprises 400 residues: GTPase-binding protein rid1 (400 aa).

Residues 16–27 show a composition bias toward polar residues; it reads LSSDGLSESVNS. The interval 16–47 is disordered; it reads LSSDGLSESVNSSDREDSLSFQTPSTPSEDEM. A GBD/FH3 domain is found at 39–400; it reads PSTPSEDEMP…PYKLVQTGST (362 aa).

Its subcellular location is the cytoplasm. This is GTPase-binding protein rid1 (rid1) from Schizosaccharomyces pombe (strain 972 / ATCC 24843) (Fission yeast).